We begin with the raw amino-acid sequence, 347 residues long: Chaperone protein DnaJ 1 (347 aa).

The J domain occupies D5 to A75. Residues A68–D77 are compositionally biased toward low complexity. A disordered region spans residues A68–A91. A CR-type zinc finger spans residues G107–A181. Zn(2+) contacts are provided by C120, C123, C137, C140, C155, C158, C169, and C172. 4 CXXCXGXG motif repeats span residues C120–G127, C137–G144, C155–G162, and C169–G176.

This sequence belongs to the DnaJ family. As to quaternary structure, homodimer. Zn(2+) is required as a cofactor.

It localises to the cytoplasm. Participates actively in the response to hyperosmotic and heat shock by preventing the aggregation of stress-denatured proteins and by disaggregating proteins, also in an autonomous, DnaK-independent fashion. Unfolded proteins bind initially to DnaJ; upon interaction with the DnaJ-bound protein, DnaK hydrolyzes its bound ATP, resulting in the formation of a stable complex. GrpE releases ADP from DnaK; ATP binding to DnaK triggers the release of the substrate protein, thus completing the reaction cycle. Several rounds of ATP-dependent interactions between DnaJ, DnaK and GrpE are required for fully efficient folding. Also involved, together with DnaK and GrpE, in the DNA replication of plasmids through activation of initiation proteins. The sequence is that of Chaperone protein DnaJ 1 from Aromatoleum aromaticum (strain DSM 19018 / LMG 30748 / EbN1) (Azoarcus sp. (strain EbN1)).